The primary structure comprises 217 residues: MAISTLTLTQSLYTRSFRPTIFFSSSSSSSFSCLCSSSSDCEPKLSVKKRVFGVGLGFLASSILSLTPLDADATRIDYYATVGDPLCEYSYAKSGLGFCDLDVGFGDEAPRGVLVNIHYTARFADGTLFDSSYKRARPLTMRIGVGKVIRGLDQGILGGEGVPPMRVGGKRKLQIPPKLAYGPEPAGCFSGDCNIPGNATLLYDINFVEIYPGSNTR.

A chloroplast-targeting transit peptide spans 1 to 34 (MAISTLTLTQSLYTRSFRPTIFFSSSSSSSFSCL). 2 disulfide bridges follow: C87–C99 and C188–C193. One can recognise a PPIase FKBP-type domain in the interval 112-211 (GVLVNIHYTA…LYDINFVEIY (100 aa)).

This sequence belongs to the FKBP-type PPIase family. In terms of assembly, part of the chloroplast NDH complex, composed of a mixture of chloroplast and nucleus encoded subunits. Component of the NDH lumenal subcomplex, at least composed of PnsL1, PnsL2, PnsL3, PnsL4 and PnsL5.

It is found in the plastid. The protein localises to the chloroplast thylakoid lumen. It catalyses the reaction [protein]-peptidylproline (omega=180) = [protein]-peptidylproline (omega=0). Its function is as follows. NDH shuttles electrons from NAD(P)H:plastoquinone, via FMN and iron-sulfur (Fe-S) centers, to quinones in the photosynthetic chain and possibly in a chloroplast respiratory chain. The immediate electron acceptor for the enzyme in this species is believed to be plastoquinone. Couples the redox reaction to proton translocation, and thus conserves the redox energy in a proton gradient. PPIases accelerate the folding of proteins. It catalyzes the cis-trans isomerization of proline imidic peptide bonds in oligopeptides. Seems to be essential for stabilizing the NDH subcomplex A. The sequence is that of Photosynthetic NDH subunit of lumenal location 4, chloroplastic from Arabidopsis thaliana (Mouse-ear cress).